The chain runs to 621 residues: tRNA uridine 5-carboxymethylaminomethyl modification enzyme MnmG (621 aa).

FAD is bound at residue 8–13 (GAGHAG). 269–283 (GPRYCPSVEDKIFRF) provides a ligand contact to NAD(+).

It belongs to the MnmG family. Homodimer. Heterotetramer of two MnmE and two MnmG subunits. It depends on FAD as a cofactor.

It localises to the cytoplasm. Its function is as follows. NAD-binding protein involved in the addition of a carboxymethylaminomethyl (cmnm) group at the wobble position (U34) of certain tRNAs, forming tRNA-cmnm(5)s(2)U34. The sequence is that of tRNA uridine 5-carboxymethylaminomethyl modification enzyme MnmG from Chlorobium phaeobacteroides (strain DSM 266 / SMG 266 / 2430).